The following is a 546-amino-acid chain: Cytokine-like nuclear factor N-PAC (546 aa).

Positions 8 to 66 (LGDLVWGKLGRYPPWPGKIVNPPKDLKKPRGKKCFFVKFFGTEDHAWIKVEQLKPYHAH) constitute a PWWP domain. Composition is skewed to basic and acidic residues over residues 91 to 145 (RRAK…EGKK) and 161 to 181 (RAQE…KDLT). Residues 91 to 187 (RRAKGKDQTS…KDLTIPESST (97 aa)) are disordered. Residue serine 130 is modified to Phosphoserine. Residue lysine 135 forms a Glycyl lysine isopeptide (Lys-Gly) (interchain with G-Cter in SUMO2) linkage. Serine 166 carries the post-translational modification Phosphoserine. Positions 167 to 179 (PRKRGRPPKDEKD) form a DNA-binding region, a.T hook. Glycyl lysine isopeptide (Lys-Gly) (interchain with G-Cter in SUMO2) cross-links involve residues lysine 175, lysine 178, lysine 200, and lysine 210. The tract at residues 213-216 (DPHF) is interaction with histone H3. The segment at 215–224 (HFHHFLLSQT) is interaction with KDM1B. Residues lysine 226, lysine 236, lysine 239, and lysine 268 each participate in a glycyl lysine isopeptide (Lys-Gly) (interchain with G-Cter in SUMO2) cross-link. The tract at residues 260-546 (GSITPTDKKI…MSAVYRAYIH (287 aa)) is dehydrogenase domain. 270 to 284 (GFLGLGLMGSGIVSN) is a binding site for NAD(+). A Glycyl lysine isopeptide (Lys-Gly) (interchain with G-Cter in SUMO2) cross-link involves residue lysine 301. NAD(+)-binding residues include threonine 355 and lysine 498. At serine 533 the chain carries Phosphoserine.

The protein belongs to the HIBADH-related family. NP60 subfamily. In terms of assembly, homotetramere. Interacts with MAPK14. Interacts with KDM1B at nucleosomes; this interaction stimulates H3K4me1 and H3K4me2 demethylation. Binds to mononucleosomes. Interacts with GATA4; the interaction is required for a synergistic activation of GATA4 target genes transcription.

Its subcellular location is the nucleus. It localises to the chromosome. Cytokine-like nuclear factor with chromatin gene reader activity involved in chromatin modification and regulation of gene expression. Acts as a nucleosome-destabilizing factor that is recruited to genes during transcriptional activation. Recognizes and binds histone H3 without a preference for specific epigenetic markers and also binds DNA. Interacts with KDM1B and promotes its histone demethylase activity by facilitating the capture of H3 tails, they form a multifunctional enzyme complex that modifies transcribed chromatin and facilitates Pol II transcription through nucleosomes. Stimulates the acetylation of 'Lys-56' of nucleosomal histone H3 (H3K56ac) by EP300. With GATA4, co-binds a defined set of heart development genes and coregulates their expression during cardiomyocyte differentiation. Regulates p38 MAP kinase activity by mediating stress activation of MAPK14/p38alpha and specifically regulating MAPK14 signaling. Indirectly promotes phosphorylation of MAPK14 and activation of ATF2. The phosphorylation of MAPK14 requires upstream activity of MAP2K4 and MAP2K6. In Mus musculus (Mouse), this protein is Cytokine-like nuclear factor N-PAC.